The primary structure comprises 234 residues: Small ribosomal subunit protein uS3 (234 aa).

Residues 39-107 enclose the KH type-2 domain; that stretch reads IRKFLKKELY…EVSINIKEVK (69 aa).

This sequence belongs to the universal ribosomal protein uS3 family. Part of the 30S ribosomal subunit. Forms a tight complex with proteins S10 and S14.

Functionally, binds the lower part of the 30S subunit head. Binds mRNA in the 70S ribosome, positioning it for translation. The polypeptide is Small ribosomal subunit protein uS3 (Helicobacter pylori (strain J99 / ATCC 700824) (Campylobacter pylori J99)).